A 644-amino-acid polypeptide reads, in one-letter code: DNA gyrase subunit B (644 aa).

Residues 429–543 (CEIFLVEGDS…AGYVYIAQPP (115 aa)) form the Toprim domain. Mg(2+) is bound by residues Glu435, Asp508, and Asp510.

The protein belongs to the type II topoisomerase GyrB family. Heterotetramer, composed of two GyrA and two GyrB chains. In the heterotetramer, GyrA contains the active site tyrosine that forms a transient covalent intermediate with DNA, while GyrB binds cofactors and catalyzes ATP hydrolysis. Mg(2+) is required as a cofactor. Requires Mn(2+) as cofactor. The cofactor is Ca(2+).

It localises to the cytoplasm. It carries out the reaction ATP-dependent breakage, passage and rejoining of double-stranded DNA.. A type II topoisomerase that negatively supercoils closed circular double-stranded (ds) DNA in an ATP-dependent manner to modulate DNA topology and maintain chromosomes in an underwound state. Negative supercoiling favors strand separation, and DNA replication, transcription, recombination and repair, all of which involve strand separation. Also able to catalyze the interconversion of other topological isomers of dsDNA rings, including catenanes and knotted rings. Type II topoisomerases break and join 2 DNA strands simultaneously in an ATP-dependent manner. The chain is DNA gyrase subunit B from Staphylococcus aureus (strain MRSA252).